The primary structure comprises 222 residues: Beta-casein (222 aa).

Positions 1–15 are cleaved as a signal peptide; it reads MKVLILACLVALAIA. Residue Thr-27 is modified to Phosphothreonine. 4 positions are modified to phosphoserine: Ser-30, Ser-32, Ser-33, and Ser-34.

Belongs to the beta-casein family. In terms of tissue distribution, mammary gland specific. Secreted in milk.

The protein resides in the secreted. In terms of biological role, important role in determination of the surface properties of the casein micelles. The chain is Beta-casein (CSN2) from Capra hircus (Goat).